The sequence spans 271 residues: tRNA (guanine-N(7)-)-methyltransferase (271 aa).

The segment at 1–52 is disordered; that stretch reads MSDSHHTPEAASASLRHVRAKGEPRFPDGPKADPAGSHFERRIRSFQPRRSR. Over residues 20 to 31 the composition is skewed to basic and acidic residues; that stretch reads AKGEPRFPDGPK. Positions 93, 118, 145, and 168 each coordinate S-adenosyl-L-methionine. Asp-168 is a catalytic residue. Substrate-binding positions include Lys-172, Asp-204, and 241 to 244; that span reads TRFE.

It belongs to the class I-like SAM-binding methyltransferase superfamily. TrmB family.

It carries out the reaction guanosine(46) in tRNA + S-adenosyl-L-methionine = N(7)-methylguanosine(46) in tRNA + S-adenosyl-L-homocysteine. It participates in tRNA modification; N(7)-methylguanine-tRNA biosynthesis. In terms of biological role, catalyzes the formation of N(7)-methylguanine at position 46 (m7G46) in tRNA. The polypeptide is tRNA (guanine-N(7)-)-methyltransferase (Streptomyces coelicolor (strain ATCC BAA-471 / A3(2) / M145)).